Consider the following 643-residue polypeptide: Translation factor GUF1, mitochondrial (643 aa).

Residues 1–18 (MLASQAIKRIFHRSWKPL) constitute a mitochondrion transit peptide. Residues 43–226 (ENYRNFSIVA…AIIDRIPPPT (184 aa)) enclose the tr-type G domain. GTP contacts are provided by residues 52-59 (AHIDHGKS), 118-122 (DTPGH), and 172-175 (NKID).

This sequence belongs to the TRAFAC class translation factor GTPase superfamily. Classic translation factor GTPase family. LepA subfamily.

The protein localises to the mitochondrion inner membrane. It carries out the reaction GTP + H2O = GDP + phosphate + H(+). In terms of biological role, promotes mitochondrial protein synthesis. May act as a fidelity factor of the translation reaction, by catalyzing a one-codon backward translocation of tRNAs on improperly translocated ribosomes. Binds to mitochondrial ribosomes in a GTP-dependent manner. The sequence is that of Translation factor GUF1, mitochondrial from Zygosaccharomyces rouxii (strain ATCC 2623 / CBS 732 / NBRC 1130 / NCYC 568 / NRRL Y-229).